We begin with the raw amino-acid sequence, 297 residues long: uncharacterized protein (297 aa).

A helical transmembrane segment spans residues Val-191 to Leu-211. Residues Ser-275 to Thr-287 show a composition bias toward polar residues. The tract at residues Ser-275–Met-297 is disordered. The segment covering His-288 to Met-297 has biased composition (basic and acidic residues).

It is found in the host membrane. This is an uncharacterized protein from Cryphonectria parasitica mycoreovirus 1 (strain 9B21) (CpMYRV-1).